A 320-amino-acid polypeptide reads, in one-letter code: Bifunctional ligase/repressor BirA (320 aa).

The segment at residues 22–41 is a DNA-binding region (H-T-H motif); sequence GEQLGERLGMSRAAINKHIQ. The region spanning 66-254 is the BPL/LPL catalytic domain; sequence LLDADRIHSQ…KLRAALELFE (189 aa). Biotin contacts are provided by residues 89–91, Q112, 116–118, and K183; these read STN and RGR.

The protein belongs to the biotin--protein ligase family.

The catalysed reaction is biotin + L-lysyl-[protein] + ATP = N(6)-biotinyl-L-lysyl-[protein] + AMP + diphosphate + H(+). In terms of biological role, acts both as a biotin--[acetyl-CoA-carboxylase] ligase and a biotin-operon repressor. In the presence of ATP, BirA activates biotin to form the BirA-biotinyl-5'-adenylate (BirA-bio-5'-AMP or holoBirA) complex. HoloBirA can either transfer the biotinyl moiety to the biotin carboxyl carrier protein (BCCP) subunit of acetyl-CoA carboxylase, or bind to the biotin operator site and inhibit transcription of the operon. This Salmonella typhimurium (strain LT2 / SGSC1412 / ATCC 700720) protein is Bifunctional ligase/repressor BirA.